A 448-amino-acid chain; its full sequence is Methionine aminopeptidase 2-1 (448 aa).

The tract at residues 1–83 (MAAQVIPELQ…TQKAQTEPPR (83 aa)) is disordered. Residues 32–48 (ENEDGDSEDDNGDDQGA) are compositionally biased toward acidic residues. Over residues 59–73 (AKKKKKKKPKKKKKD) the composition is skewed to basic residues. A substrate-binding site is contributed by His-198. The a divalent metal cation site is built by Asp-218, Asp-229, and His-298. A substrate-binding site is contributed by His-306. Residues Glu-334 and Glu-429 each contribute to the a divalent metal cation site.

It belongs to the peptidase M24A family. Methionine aminopeptidase eukaryotic type 2 subfamily. Requires Co(2+) as cofactor. Zn(2+) is required as a cofactor. The cofactor is Mn(2+). It depends on Fe(2+) as a cofactor.

The protein localises to the cytoplasm. The catalysed reaction is Release of N-terminal amino acids, preferentially methionine, from peptides and arylamides.. In terms of biological role, cotranslationally removes the N-terminal methionine from nascent proteins. The N-terminal methionine is often cleaved when the second residue in the primary sequence is small and uncharged (Met-Ala-, Cys, Gly, Pro, Ser, Thr, or Val). This Ajellomyces capsulatus (strain G186AR / H82 / ATCC MYA-2454 / RMSCC 2432) (Darling's disease fungus) protein is Methionine aminopeptidase 2-1.